A 286-amino-acid chain; its full sequence is MSTVLRLAIQKSGRLSEESIKLIKECGIEFSSGGGTLKSVAYNFPLEVLFLRDDDIPGYVADGVADIGIVGENVAVETRKKMDTVRQLGFSKCRLSIGVPKAMEFTGKESLNGMRIATSYPNILSDYLFENNIKASIHEISGSVEIAPGIGLADAICDIVSSGSTLISNGLKETEVVFRSEAILAACPQLSAEKKAILDELMFRISAVKNAEKTKYIMLNVPDHAIQTVTALLPGVKSPTVMPLAEKGWSSLHSVVKESDFWEILSKLKEAGAEGILVLPIEKIVK.

The protein belongs to the ATP phosphoribosyltransferase family. Long subfamily. Mg(2+) serves as cofactor.

It is found in the cytoplasm. It catalyses the reaction 1-(5-phospho-beta-D-ribosyl)-ATP + diphosphate = 5-phospho-alpha-D-ribose 1-diphosphate + ATP. It participates in amino-acid biosynthesis; L-histidine biosynthesis; L-histidine from 5-phospho-alpha-D-ribose 1-diphosphate: step 1/9. Its activity is regulated as follows. Feedback inhibited by histidine. In terms of biological role, catalyzes the condensation of ATP and 5-phosphoribose 1-diphosphate to form N'-(5'-phosphoribosyl)-ATP (PR-ATP). Has a crucial role in the pathway because the rate of histidine biosynthesis seems to be controlled primarily by regulation of HisG enzymatic activity. The protein is ATP phosphoribosyltransferase of Cytophaga hutchinsonii (strain ATCC 33406 / DSM 1761 / CIP 103989 / NBRC 15051 / NCIMB 9469 / D465).